Here is a 466-residue protein sequence, read N- to C-terminus: ATP synthase subunit beta (466 aa).

152-159 (GGAGVGKT) contacts ATP.

Belongs to the ATPase alpha/beta chains family. In terms of assembly, F-type ATPases have 2 components, CF(1) - the catalytic core - and CF(0) - the membrane proton channel. CF(1) has five subunits: alpha(3), beta(3), gamma(1), delta(1), epsilon(1). CF(0) has three main subunits: a(1), b(2) and c(9-12). The alpha and beta chains form an alternating ring which encloses part of the gamma chain. CF(1) is attached to CF(0) by a central stalk formed by the gamma and epsilon chains, while a peripheral stalk is formed by the delta and b chains.

It localises to the cell inner membrane. It catalyses the reaction ATP + H2O + 4 H(+)(in) = ADP + phosphate + 5 H(+)(out). Functionally, produces ATP from ADP in the presence of a proton gradient across the membrane. The catalytic sites are hosted primarily by the beta subunits. The sequence is that of ATP synthase subunit beta from Sulfurovum sp. (strain NBC37-1).